A 497-amino-acid polypeptide reads, in one-letter code: 4,4'-diapolycopene oxygenase (497 aa).

It belongs to the carotenoid/retinoid oxidoreductase family. The cofactor is FAD.

It catalyses the reaction all-trans-4,4'-diapolycopene + 4 AH2 + 4 O2 = all-trans-4,4'-diapolycopene-4,4'-dial + 4 A + 6 H2O. The catalysed reaction is all-trans-4,4'-diaponeurosporene + 2 AH2 + 2 O2 = 4,4'-diaponeurosporenal + 2 A + 3 H2O. Its pathway is carotenoid biosynthesis. Involved in the biosynthesis of C30 carotenoids. Catalyzes the oxidation of the terminal methyl side groups of 4,4'-diapolycopene to yield 4,4'-diapolycopen-4,4'-dial via the aldehyde intermediate 4,4'-diapolycopen-al. Also able to catalyze the oxidation of the terminal methyl side group of 4,4'-diaponeurosporene to form 4,4'-diaponeurosporen-4-al. It has moderate to low activity on the C40 substrates neurosporene and lycopene, and has no detectable activity on zeta-carotene or beta-carotene. The protein is 4,4'-diapolycopene oxygenase of Methylomonas sp.